A 210-amino-acid polypeptide reads, in one-letter code: Ribonuclease HII (210 aa).

In terms of domain architecture, RNase H type-2 spans 17-206 (DIICGVDEAG…VRALLGGVTP (190 aa)). Residues Asp-23, Glu-24, and Asp-115 each contribute to the a divalent metal cation site.

The protein belongs to the RNase HII family. It depends on Mn(2+) as a cofactor. Requires Mg(2+) as cofactor.

Its subcellular location is the cytoplasm. The enzyme catalyses Endonucleolytic cleavage to 5'-phosphomonoester.. Its function is as follows. Endonuclease that specifically degrades the RNA of RNA-DNA hybrids. The polypeptide is Ribonuclease HII (Janthinobacterium sp. (strain Marseille) (Minibacterium massiliensis)).